A 478-amino-acid polypeptide reads, in one-letter code: Membrane-bound lytic murein transglycosylase F (478 aa).

The first 22 residues, 1–22 (MTRFLFAIILGLLLTACQQETV), serve as a signal peptide directing secretion. The non-LT domain stretch occupies residues 23 to 257 (EETEFVPHKL…HLNEKYFGHV (235 aa)). The LT domain stretch occupies residues 258-478 (KRFDYIDTRA…PGTLSPDKPK (221 aa)). E302 is an active-site residue. Positions 447–478 (KQQNSEEVAPSDLTAEETPVPAPGTLSPDKPK) are disordered.

The protein in the N-terminal section; belongs to the bacterial solute-binding protein 3 family. This sequence in the C-terminal section; belongs to the transglycosylase Slt family.

Its subcellular location is the cell outer membrane. It catalyses the reaction Exolytic cleavage of the (1-&gt;4)-beta-glycosidic linkage between N-acetylmuramic acid (MurNAc) and N-acetylglucosamine (GlcNAc) residues in peptidoglycan, from either the reducing or the non-reducing ends of the peptidoglycan chains, with concomitant formation of a 1,6-anhydrobond in the MurNAc residue.. Functionally, murein-degrading enzyme that degrades murein glycan strands and insoluble, high-molecular weight murein sacculi, with the concomitant formation of a 1,6-anhydromuramoyl product. Lytic transglycosylases (LTs) play an integral role in the metabolism of the peptidoglycan (PG) sacculus. Their lytic action creates space within the PG sacculus to allow for its expansion as well as for the insertion of various structures such as secretion systems and flagella. This is Membrane-bound lytic murein transglycosylase F from Shewanella oneidensis (strain ATCC 700550 / JCM 31522 / CIP 106686 / LMG 19005 / NCIMB 14063 / MR-1).